Consider the following 417-residue polypeptide: NADH-quinone oxidoreductase subunit D (417 aa).

This sequence belongs to the complex I 49 kDa subunit family. As to quaternary structure, NDH-1 is composed of 14 different subunits. Subunits NuoB, C, D, E, F, and G constitute the peripheral sector of the complex.

It localises to the cell inner membrane. It carries out the reaction a quinone + NADH + 5 H(+)(in) = a quinol + NAD(+) + 4 H(+)(out). Its function is as follows. NDH-1 shuttles electrons from NADH, via FMN and iron-sulfur (Fe-S) centers, to quinones in the respiratory chain. The immediate electron acceptor for the enzyme in this species is believed to be ubiquinone. Couples the redox reaction to proton translocation (for every two electrons transferred, four hydrogen ions are translocated across the cytoplasmic membrane), and thus conserves the redox energy in a proton gradient. This is NADH-quinone oxidoreductase subunit D from Paraburkholderia phytofirmans (strain DSM 17436 / LMG 22146 / PsJN) (Burkholderia phytofirmans).